Consider the following 171-residue polypeptide: Dual specificity protein phosphatase OPG106 (171 aa).

A dimerization region spans residues 1–27 (MDKKSLYKYLLLRSTGDMHKAKSPTIM). One can recognise a Tyrosine-protein phosphatase domain in the interval 23–171 (SPTIMTRVTN…IIEKYVIDKN (149 aa)). Cys-110 serves as the catalytic Phosphocysteine intermediate.

The protein belongs to the protein-tyrosine phosphatase family. Non-receptor class dual specificity subfamily. In terms of assembly, homodimer.

The protein resides in the virion. It is found in the host cytoplasm. The catalysed reaction is O-phospho-L-tyrosyl-[protein] + H2O = L-tyrosyl-[protein] + phosphate. It catalyses the reaction O-phospho-L-seryl-[protein] + H2O = L-seryl-[protein] + phosphate. Functionally, serine/tyrosine phosphatase which down-regulates cellular antiviral response by dephosphorylating activated host STAT1 and blocking interferon (IFN)-stimulated innate immune responses. Dephosphorylates the OPG144 protein. This Bos taurus (Bovine) protein is Dual specificity protein phosphatase OPG106 (OPG106).